Here is a 123-residue protein sequence, read N- to C-terminus: Small ribosomal subunit protein uS12 (123 aa).

D89 carries the post-translational modification 3-methylthioaspartic acid.

Belongs to the universal ribosomal protein uS12 family. Part of the 30S ribosomal subunit. Contacts proteins S8 and S17. May interact with IF1 in the 30S initiation complex.

Its function is as follows. With S4 and S5 plays an important role in translational accuracy. In terms of biological role, interacts with and stabilizes bases of the 16S rRNA that are involved in tRNA selection in the A site and with the mRNA backbone. Located at the interface of the 30S and 50S subunits, it traverses the body of the 30S subunit contacting proteins on the other side and probably holding the rRNA structure together. The combined cluster of proteins S8, S12 and S17 appears to hold together the shoulder and platform of the 30S subunit. The protein is Small ribosomal subunit protein uS12 of Methylobacterium nodulans (strain LMG 21967 / CNCM I-2342 / ORS 2060).